We begin with the raw amino-acid sequence, 443 residues long: Probable glycine dehydrogenase (decarboxylating) subunit 1 (443 aa).

It belongs to the GcvP family. N-terminal subunit subfamily. In terms of assembly, the glycine cleavage system is composed of four proteins: P, T, L and H. In this organism, the P 'protein' is a heterodimer of two subunits.

The catalysed reaction is N(6)-[(R)-lipoyl]-L-lysyl-[glycine-cleavage complex H protein] + glycine + H(+) = N(6)-[(R)-S(8)-aminomethyldihydrolipoyl]-L-lysyl-[glycine-cleavage complex H protein] + CO2. Its function is as follows. The glycine cleavage system catalyzes the degradation of glycine. The P protein binds the alpha-amino group of glycine through its pyridoxal phosphate cofactor; CO(2) is released and the remaining methylamine moiety is then transferred to the lipoamide cofactor of the H protein. The protein is Probable glycine dehydrogenase (decarboxylating) subunit 1 of Chlorobium limicola (strain DSM 245 / NBRC 103803 / 6330).